The sequence spans 620 residues: Acetylcholinesterase 1 (620 aa).

The signal sequence occupies residues 1 to 31 (MRNSLLFFIFLPSTILAVDLIHLHDGSPLFG). The N-linked (GlcNAc...) asparagine glycan is linked to Asn-74. Cysteines 82 and 109 form a disulfide. The active-site Acyl-ester intermediate is Ser-216. Cysteines 270 and 286 form a disulfide. Asn-272 carries an N-linked (GlcNAc...) asparagine glycan. Residues Glu-346 and His-468 each act as charge relay system in the active site. Cys-430 and Cys-558 are disulfide-bonded. Asn-486 and Asn-536 each carry an N-linked (GlcNAc...) asparagine glycan.

This sequence belongs to the type-B carboxylesterase/lipase family. In terms of assembly, oligomer composed of disulfide-linked homodimers.

The protein resides in the synapse. The protein localises to the secreted. It localises to the cell membrane. It carries out the reaction acetylcholine + H2O = choline + acetate + H(+). Its function is as follows. Rapidly hydrolyzes acetylcholine and releases choline into the synapse. It can hydrolyze propionylcholine and butyrylthiocholine in vitro. In Caenorhabditis elegans, this protein is Acetylcholinesterase 1 (ace-1).